Reading from the N-terminus, the 226-residue chain is 7-cyano-7-deazaguanine synthase (226 aa).

11 to 21 (LSGGLDSATCL) lines the ATP pocket. Cys191, Cys201, Cys204, and Cys207 together coordinate Zn(2+).

This sequence belongs to the QueC family. The cofactor is Zn(2+).

The enzyme catalyses 7-carboxy-7-deazaguanine + NH4(+) + ATP = 7-cyano-7-deazaguanine + ADP + phosphate + H2O + H(+). It participates in purine metabolism; 7-cyano-7-deazaguanine biosynthesis. Its function is as follows. Catalyzes the ATP-dependent conversion of 7-carboxy-7-deazaguanine (CDG) to 7-cyano-7-deazaguanine (preQ(0)). In Aromatoleum aromaticum (strain DSM 19018 / LMG 30748 / EbN1) (Azoarcus sp. (strain EbN1)), this protein is 7-cyano-7-deazaguanine synthase.